Consider the following 338-residue polypeptide: Limbic system-associated membrane protein (338 aa).

The N-terminal stretch at 1–28 (MVGRVQPDRKQLPLVLLRLLCLLPTGLP) is a signal peptide. 3 consecutive Ig-like C2-type domains span residues 29–122 (VRSV…PKTS), 132–214 (PKIS…VKVT), and 219–304 (PTIT…ASLV). N-linked (GlcNAc...) asparagine glycans are attached at residues Asn40 and Asn66. A disulfide bridge links Cys53 with Cys111. Tyr94 carries the post-translational modification Phosphotyrosine. Asn136 and Asn148 each carry an N-linked (GlcNAc...) asparagine glycan. 2 disulfides stabilise this stretch: Cys153/Cys197 and Cys239/Cys290. Residues Asn279, Asn287, and Asn300 are each glycosylated (N-linked (GlcNAc...) asparagine). Asn315 is lipidated: GPI-anchor amidated asparagine; alternate. N-linked (GlcNAc...) asparagine; alternate glycosylation occurs at Asn315. The propeptide at 316-338 (GSISLAVPLWLLAASLFCLLSKC) is removed in mature form.

This sequence belongs to the immunoglobulin superfamily. IgLON family. Expressed mostly by neurons comprising limbic-associated cortical and subcortical regions that function in cognition, emotion, memory, and learning.

It is found in the cell membrane. In terms of biological role, mediates selective neuronal growth and axon targeting. Contributes to the guidance of developing axons and remodeling of mature circuits in the limbic system. Essential for normal growth of the hippocampal mossy fiber projection. This Rattus norvegicus (Rat) protein is Limbic system-associated membrane protein (Lsamp).